A 509-amino-acid chain; its full sequence is Cytochrome P450 monooxygenase ARMGADRAFT_974139 (509 aa).

Residues 4–24 (ASLAVVVWAILLVLWLRRIFG) form a helical membrane-spanning segment. 2 N-linked (GlcNAc...) asparagine glycosylation sites follow: asparagine 96 and asparagine 279. Cysteine 439 is a binding site for heme.

This sequence belongs to the cytochrome P450 family. The cofactor is heme.

It is found in the membrane. Its pathway is secondary metabolite biosynthesis. Functionally, cytochrome P450 monooxygenase, part of the gene cluster that mediates the biosynthesis of melleolides, a range of antifungal and phytotoxic polyketide derivatives composed of an orsellinic acid (OA) moiety esterified to various sesquiterpene alcohols. The first step in melleolides biosynthesis is performed by the delta(6)-protoilludene synthase PRO1 which catalyzes the cyclization of farnesyl diphosphate to protoilludene. The orsellinic acid synthase armB produces OA by condensing acetyl-CoA with 3 malonyl-CoA units in a three-round chain elongation reaction folowed by a C2-C7 ring closure. ArmB further catalyzes the trans-esterification of OA to the various sesquiterpene alcohols resulting from the hydroxylation of protoilludene. The melleolides cluster also includes 5 cytochrome P450 monooxygenases, 4 NAD(+)-dependent oxidoreductases, one flavin-dependent oxidoreductase, and one O-methyltransferase. The cytochrome P450 monooxygenases may be involved in protoilludene hydroxylation to elaborate melleolides with multiple alcohol groups, such as melleolide D, which carries alcohol functionalities at C-4, C-5, C-10, and C-13. The role of the NAD(+)-dependent enzymes remains unknown. Numerous melleolides, including arnamial, show 5'-O-methylation of the aromatic moiety which may be catalyzed by the methyltransferase encoded in the cluster. The flavin-dependent oxidoreductase might represent the dehydrogenase yielding the aldehyde in position 1 of arnamial and other melleolides. Finally, several halogenase localized outside of the cluster, are able to catalyze the transfer of a single chlorine atom to the melleolide backbone, resulting in a 6'-chloromelleolide product. The polypeptide is Cytochrome P450 monooxygenase ARMGADRAFT_974139 (Armillaria gallica (Bulbous honey fungus)).